Consider the following 395-residue polypeptide: Methylmalonyl-CoA decarboxylase subunit beta (395 aa).

Transmembrane regions (helical) follow at residues 17–37, 43–63, 103–123, 128–148, 180–200, 230–250, 278–298, 304–324, and 374–394; these read LNMG…LAIA, LLLV…AGMM, GIFP…GPLI, SLLL…GAIA, PHLM…VPII, IIFP…AATL, INII…AEAF, LAIL…GVLL, and GPNV…LSLF.

The protein belongs to the GcdB/MmdB/OadB family. The methylmalonyl-CoA decarboxylase is composed of four subunits: the carboxyltransferase alpha subunit (MmdA), the tunnel beta subunit (MmdB), the biotin-containing gamma subunit (MmdC) and the delta subunit (MmdD). The N-terminus is blocked.

It localises to the cell membrane. It carries out the reaction (S)-methylmalonyl-CoA + Na(+)(in) + H(+)(out) = propanoyl-CoA + Na(+)(out) + CO2. Functionally, tunnel subunit of the sodium ion pump methylmalonyl-CoA decarboxylase, which converts the chemical energy of a decarboxylation reaction into an electrochemical gradient of Na(+) ions across the cytoplasmic membrane, thereby creating a sodium ion motive force that is used for ATP synthesis. The beta subunit catalyzes the decarboxylation of the carboxybiotin carrier protein and the coupled export of Na(+) ions. The chain is Methylmalonyl-CoA decarboxylase subunit beta from Propionigenium modestum.